A 210-amino-acid polypeptide reads, in one-letter code: Calaxin (210 aa).

EF-hand domains follow at residues 64 to 99 (TDDM…FLRG), 100 to 135 (TLDE…SLIR), and 145 to 180 (GIKD…ENLL). Asp77, Asp79, Asp81, Tyr83, Glu88, Asp113, Asn115, Asp117, Tyr119, Glu124, Asp158, Asp160, Asp162, Arg164, and Asp169 together coordinate Ca(2+).

Component of the outer dynein arm-docking complex along with ODAD1, ODAD2, ODAD3 and ODAD4.

It is found in the cytoplasm. The protein resides in the cytoskeleton. Its subcellular location is the cilium axoneme. The protein localises to the cell projection. It localises to the cilium. It is found in the flagellum. Functionally, component of the outer dynein arm-docking complex (ODA-DC) that mediates outer dynein arms (ODA) binding onto the doublet microtubule. Seems to regulate the assembly of both ODAs and their axonemal docking complex onto ciliary microtubules. Regulates ciliary and flagellar motility and is required for cilia-driven determination of body laterality. Its function is as follows. Regulates ciliary motility and is required for cilia-driven determination of body laterality. The chain is Calaxin (clxn) from Danio rerio (Zebrafish).